The chain runs to 278 residues: MDVRQSIHSAHAKTLDTQGLRNEFLVEKVFVADEYTMVYSHIDRIIVGGIMPVTKTVSVGGEVGKQLGVSYFLERRELGVINIGGAGTITVDGQCYEIGHRDALYVGKGAKEVVFASIDTATPAKFYYNCAPAHTTYPTKKVTPDEVSPVTLGDNLTSNRRTINKYFVPDVLETCQLSMGLTELAPGNLWNTMPCHTHERRMEVYFYFNMDDDACVFHMMGQPQETRHIVMHNEQAVISPSWSIHSGVGTKAYTFIWGMVGENQVFDDMDHVAVKDLR.

Zn(2+)-binding residues include histidine 196, histidine 198, glutamate 203, and histidine 245.

It belongs to the KduI family. Homohexamer. It depends on Zn(2+) as a cofactor.

The enzyme catalyses 5-dehydro-4-deoxy-D-glucuronate = 3-deoxy-D-glycero-2,5-hexodiulosonate. Its pathway is glycan metabolism; pectin degradation; 2-dehydro-3-deoxy-D-gluconate from pectin: step 4/5. Its function is as follows. Catalyzes the isomerization of 5-dehydro-4-deoxy-D-glucuronate to 3-deoxy-D-glycero-2,5-hexodiulosonate. This is 4-deoxy-L-threo-5-hexosulose-uronate ketol-isomerase from Escherichia coli (strain UTI89 / UPEC).